A 1143-amino-acid polypeptide reads, in one-letter code: Exportin-T (1143 aa).

Residues 566–593 (ARNKLRAAQGSGRTTPSSSDNVDLGPSS) are disordered. Residues 576-593 (SGRTTPSSSDNVDLGPSS) are compositionally biased toward polar residues.

It belongs to the exportin family.

The protein resides in the nucleus. It localises to the cytoplasm. Its function is as follows. tRNA nucleus export receptor which facilitates tRNA translocation across the nuclear pore complex. Involved in pre-tRNA splicing, probably by affecting the interaction of pre-tRNA with splicing endonuclease. The chain is Exportin-T (LOS1) from Cryptococcus neoformans var. neoformans serotype D (strain JEC21 / ATCC MYA-565) (Filobasidiella neoformans).